The chain runs to 309 residues: Serine/threonine-protein phosphatase 2A catalytic subunit beta isoform (309 aa).

Mn(2+) is bound by residues Asp-57, His-59, Asp-85, and Asn-117. His-118 serves as the catalytic Proton donor. The Mn(2+) site is built by His-167 and His-241. Tyr-307 is subject to Phosphotyrosine. Residue Leu-309 is modified to Leucine methyl ester.

Belongs to the PPP phosphatase family. PP-1 subfamily. In terms of assembly, PP2A consists of a common heterodimeric core enzyme (composed of a 36 kDa catalytic subunit (subunit C) and a 65 kDa constant regulatory subunit (PR65) (subunit A)) that associates with a variety of regulatory subunits. Proteins that associate with the core dimer include three families of regulatory subunits B (the R2/B/PR55/B55, R3/B''/PR72/PR130/PR59 and R5/B'/B56 families), the 48 kDa variable regulatory subunit, viral proteins, and cell signaling molecules. Binds PPME1. May indirectly interact with SGO1, most probably through regulatory B56 subunits. Interacts with CTTNBP2NL. Interacts with PTPA. Found in a complex with at least ARL2, PPP2CB, PPP2R1A, PPP2R2A, PPP2R5E and TBCD. Interacts with TBCD. Part of the core of STRIPAK complexes composed of PP2A catalytic and scaffolding subunits, the striatins (PP2A regulatory subunits), the striatin-associated proteins MOB4, STRIP1 and STRIP2, PDCD10 and members of the STE20 kinases, such as STK24 and STK26. Mn(2+) is required as a cofactor. Post-translationally, reversibly methyl esterified on Leu-309 by leucine carboxyl methyltransferase 1 (Lcmt1) and protein phosphatase methylesterase 1 (Ppme1). Carboxyl methylation influences the affinity of the catalytic subunit for the different regulatory subunits, thereby modulating the PP2A holoenzyme's substrate specificity, enzyme activity and cellular localization. In terms of processing, phosphorylation of either threonine (by autophosphorylation-activated protein kinase) or tyrosine results in inactivation of the phosphatase. Auto-dephosphorylation has been suggested as a mechanism for reactivation. May be monoubiquitinated by NOSIP.

The protein localises to the cytoplasm. It is found in the nucleus. It localises to the chromosome. Its subcellular location is the centromere. The protein resides in the cytoskeleton. The protein localises to the spindle pole. The catalysed reaction is O-phospho-L-seryl-[protein] + H2O = L-seryl-[protein] + phosphate. It catalyses the reaction O-phospho-L-threonyl-[protein] + H2O = L-threonyl-[protein] + phosphate. Functionally, catalytic subunit of protein phosphatase 2A (PP2A), a serine/threonine phosphatase involved in the regulation of a wide variety of enzymes, signal transduction pathways, and cellular events. PP2A can modulate the activity of phosphorylase B kinase, casein kinase 2, mitogen-stimulated S6 kinase, and MAP-2 kinase. Part of the striatin-interacting phosphatase and kinase (STRIPAK) complexes. STRIPAK complexes have critical roles in protein (de)phosphorylation and are regulators of multiple signaling pathways including Hippo, MAPK, nuclear receptor and cytoskeleton remodeling. Different types of STRIPAK complexes are involved in a variety of biological processes such as cell growth, differentiation, apoptosis, metabolism and immune regulation. This Mus musculus (Mouse) protein is Serine/threonine-protein phosphatase 2A catalytic subunit beta isoform (Ppp2cb).